A 141-amino-acid chain; its full sequence is Large ribosomal subunit protein uL11 (141 aa).

The protein belongs to the universal ribosomal protein uL11 family. As to quaternary structure, part of the ribosomal stalk of the 50S ribosomal subunit. Interacts with L10 and the large rRNA to form the base of the stalk. L10 forms an elongated spine to which L12 dimers bind in a sequential fashion forming a multimeric L10(L12)X complex. Post-translationally, one or more lysine residues are methylated.

Functionally, forms part of the ribosomal stalk which helps the ribosome interact with GTP-bound translation factors. The polypeptide is Large ribosomal subunit protein uL11 (Brevibacillus brevis (strain 47 / JCM 6285 / NBRC 100599)).